Consider the following 109-residue polypeptide: UPF0060 membrane protein YfjF (109 aa).

The next 4 membrane-spanning stretches (helical) occupy residues 6 to 26 (ILLF…VWLW), 32 to 52 (PAGY…LPTF), 61 to 81 (VYAA…WLVD), and 87 to 107 (LYDW…LFAP).

Belongs to the UPF0060 family.

Its subcellular location is the cell membrane. This chain is UPF0060 membrane protein YfjF (yfjF), found in Bacillus subtilis (strain 168).